The following is a 110-amino-acid chain: Large ribosomal subunit protein uL22 (110 aa).

The protein belongs to the universal ribosomal protein uL22 family. As to quaternary structure, part of the 50S ribosomal subunit.

This protein binds specifically to 23S rRNA; its binding is stimulated by other ribosomal proteins, e.g. L4, L17, and L20. It is important during the early stages of 50S assembly. It makes multiple contacts with different domains of the 23S rRNA in the assembled 50S subunit and ribosome. In terms of biological role, the globular domain of the protein is located near the polypeptide exit tunnel on the outside of the subunit, while an extended beta-hairpin is found that lines the wall of the exit tunnel in the center of the 70S ribosome. The protein is Large ribosomal subunit protein uL22 of Paracidovorax citrulli (strain AAC00-1) (Acidovorax citrulli).